The primary structure comprises 548 residues: Myrosinase (548 aa).

A signal peptide spans 1-20 (MKLLHGLALVFLLAAASCKA). 3 cysteine pairs are disulfide-bonded: cysteine 26-cysteine 458, cysteine 34-cysteine 454, and cysteine 226-cysteine 236. Glutamine 59 provides a ligand contact to substrate. Zn(2+)-binding residues include histidine 76 and aspartate 90. N-linked (GlcNAc...) asparagine glycosylation is present at asparagine 110. Substrate-binding residues include histidine 161 and asparagine 206. Residue glutamine 207 coordinates L-ascorbate. The N-linked (GlcNAc...) asparagine glycan is linked to asparagine 240. An L-ascorbate-binding site is contributed by arginine 281. An N-linked (GlcNAc...) asparagine glycan is attached at asparagine 331. A substrate-binding site is contributed by tyrosine 352. Glutamate 429 acts as the Nucleophile in catalysis. Residues tryptophan 477 and 484–485 (EF) contribute to the substrate site. N-linked (GlcNAc...) asparagine glycosylation is present at asparagine 520.

It belongs to the glycosyl hydrolase 1 family. As to quaternary structure, homodimer. As to expression, in vacuoles called myrosin grains of a certain class of cells, myrosin cells, distributed in the cotyledons and the axis of the embryo as well as in different organs of the growing plant.

Its subcellular location is the vacuole. The catalysed reaction is a thioglucoside + H2O = a sugar + a thiol.. Its function is as follows. Degradation of glucosinolates (glucose residue linked by a thioglucoside bound to an amino acid derivative) to glucose, sulfate and any of the products: thiocyanates, isothiocyanates, nitriles, epithionitriles or oxazolidine-2-thiones. The chain is Myrosinase from Brassica napus (Rape).